Here is a 258-residue protein sequence, read N- to C-terminus: Glutathione S-transferase DHAR3, chloroplastic (258 aa).

Residues 1–42 constitute a chloroplast transit peptide; sequence MISLRFQPSTTAGVLSASVSRAGFIKRCGSTKPGRVGRFVTM. The residue at position 52 (Cys52) is an S-glutathionyl cysteine. Glutathione contacts are provided by Lys54 and Asp65. The L-ascorbate site is built by Lys54 and Asp65. In terms of domain architecture, GST N-terminal spans 56 to 129; the sequence is SITTPNKLGD…DVITQALEEK (74 aa). The Nucleophile role is filled by Cys66. Cys66 and Cys69 are disulfide-bonded. The Glutathione-binding signature appears at 66–71; sequence CPFCQK. 5 residues coordinate glutathione: Lys93, Val106, Ser119, His205, and Trp252. The GST C-terminal domain maps to 130-258; the sequence is YPEPPLATPP…IAGWRPKVMG (129 aa). Lys255 serves as a coordination point for L-ascorbate.

Belongs to the GST superfamily. DHAR family. As to quaternary structure, monomer. Interacts with TRX3. In terms of processing, partial S-glutathionylation and intramolecular disulfide bond formation between Cys-66 and Cys-69 in the presence of oxidized glutathione (GSSG). Could be reduced by TRX-dependent process.

Its subcellular location is the plastid. The protein localises to the chloroplast stroma. It carries out the reaction RX + glutathione = an S-substituted glutathione + a halide anion + H(+). The catalysed reaction is L-dehydroascorbate + 2 glutathione = glutathione disulfide + L-ascorbate. Displays a dual function. As a soluble protein, exhibits glutathione-dependent thiol transferase and dehydroascorbate (DHA) reductase activities. Key component of the ascorbate recycling system. Involved in the redox homeostasis, especially in scavenging of ROS under oxidative stresses. In Arabidopsis thaliana (Mouse-ear cress), this protein is Glutathione S-transferase DHAR3, chloroplastic (DHAR3).